The sequence spans 2271 residues: Protein Ycf2 (2271 aa).

Position 1628–1635 (1628–1635 (GSIGTGRS)) interacts with ATP.

It belongs to the Ycf2 family.

It is found in the plastid. Its subcellular location is the chloroplast stroma. Its function is as follows. Probable ATPase of unknown function. Its presence in a non-photosynthetic plant (Epifagus virginiana) and experiments in tobacco indicate that it has an essential function which is probably not related to photosynthesis. The polypeptide is Protein Ycf2 (Illicium oligandrum (Star anise)).